Reading from the N-terminus, the 608-residue chain is Glutamine--fructose-6-phosphate aminotransferase [isomerizing] (608 aa).

Cys2 serves as the catalytic Nucleophile; for GATase activity. A Glutamine amidotransferase type-2 domain is found at 2–217 (CGIVGILGRE…DGDWVVLTRN (216 aa)). SIS domains lie at 284–423 (LPFD…ARGE) and 456–598 (LARE…VDQP). Catalysis depends on Lys603, which acts as the For Fru-6P isomerization activity.

In terms of assembly, homodimer.

The protein resides in the cytoplasm. The catalysed reaction is D-fructose 6-phosphate + L-glutamine = D-glucosamine 6-phosphate + L-glutamate. Catalyzes the first step in hexosamine metabolism, converting fructose-6P into glucosamine-6P using glutamine as a nitrogen source. This is Glutamine--fructose-6-phosphate aminotransferase [isomerizing] (glmS) from Bradyrhizobium diazoefficiens (strain JCM 10833 / BCRC 13528 / IAM 13628 / NBRC 14792 / USDA 110).